A 315-amino-acid polypeptide reads, in one-letter code: Methionyl-tRNA formyltransferase (315 aa).

113–116 (SLLP) serves as a coordination point for (6S)-5,6,7,8-tetrahydrofolate.

The protein belongs to the Fmt family.

It carries out the reaction L-methionyl-tRNA(fMet) + (6R)-10-formyltetrahydrofolate = N-formyl-L-methionyl-tRNA(fMet) + (6S)-5,6,7,8-tetrahydrofolate + H(+). Attaches a formyl group to the free amino group of methionyl-tRNA(fMet). The formyl group appears to play a dual role in the initiator identity of N-formylmethionyl-tRNA by promoting its recognition by IF2 and preventing the misappropriation of this tRNA by the elongation apparatus. In Escherichia coli (strain SE11), this protein is Methionyl-tRNA formyltransferase.